Reading from the N-terminus, the 470-residue chain is MNYTIDTVVAISTPPGRGGIGIIRISGKSVPEIAPKLLGKIPNPRKAEYLPFLDTDGSILERVIALFFPEPNSFTGENILEIHGHGGQIILDILLERILKTSSDIRIAHPGEFTKRAFLNNKIDLVQAEAIADIIDATSYQAAKSASNSLQGIFSRKIYIILEQLTNLRMYAESSIDFSEDEISIIPYEDIKKKLRNIISDVQKMYKSTYHGVLLREGIKIVIAGKPNAGKSSLFNALVGIDRAIISTISGTTRDTLHEYIQLNGIAFHITDTAGLQKKSDNEIEQIGMKRTWEELSNADHILWVIDPNDVTNKENDITLKHVEKVLFCKNKKTPITIIHNKSDLTKNQIGISIINNYTIITLSALFNDGTDLLQEYLSNNIKSKIQQDCKSNLSENQGNFIARRRHLNALEKSSKYLFSAQTQLLSTMSINELFAEDLGLAHKELSKIFGKFTPDDLLKRIFSTFCIGK.

The (6S)-5-formyl-5,6,7,8-tetrahydrofolate site is built by arginine 24, glutamate 81, and lysine 122. The 166-residue stretch at 218 to 383 folds into the TrmE-type G domain; it reads GIKIVIAGKP…LQEYLSNNIK (166 aa). Asparagine 228 provides a ligand contact to K(+). GTP-binding positions include 228–233, 247–253, and 272–275; these read NAGKSS, STISGTT, and DTAG. Residue serine 232 coordinates Mg(2+). Residues serine 247, isoleucine 249, and threonine 252 each contribute to the K(+) site. Residue threonine 253 participates in Mg(2+) binding. (6S)-5-formyl-5,6,7,8-tetrahydrofolate is bound at residue lysine 470.

This sequence belongs to the TRAFAC class TrmE-Era-EngA-EngB-Septin-like GTPase superfamily. TrmE GTPase family. As to quaternary structure, homodimer. Heterotetramer of two MnmE and two MnmG subunits. The cofactor is K(+).

The protein resides in the cytoplasm. Its function is as follows. Exhibits a very high intrinsic GTPase hydrolysis rate. Involved in the addition of a carboxymethylaminomethyl (cmnm) group at the wobble position (U34) of certain tRNAs, forming tRNA-cmnm(5)s(2)U34. The polypeptide is tRNA modification GTPase MnmE (Blochmanniella pennsylvanica (strain BPEN)).